The chain runs to 334 residues: Protein U17/U16 (334 aa).

Belongs to the herpesviridae US22 family. In terms of processing, isoform 1 is not glycosylated.

Functionally, isoform 3 can transactivate the human immunodeficiency virus type 1 promoter. The chain is Protein U17/U16 (U17/U16) from Homo sapiens (Human).